A 503-amino-acid chain; its full sequence is Probable cytosol aminopeptidase (503 aa).

Positions 270 and 275 each coordinate Mn(2+). The active site involves Lys282. Residues Asp293, Asp352, and Glu354 each coordinate Mn(2+). The active site involves Arg356.

Belongs to the peptidase M17 family. The cofactor is Mn(2+).

Its subcellular location is the cytoplasm. The enzyme catalyses Release of an N-terminal amino acid, Xaa-|-Yaa-, in which Xaa is preferably Leu, but may be other amino acids including Pro although not Arg or Lys, and Yaa may be Pro. Amino acid amides and methyl esters are also readily hydrolyzed, but rates on arylamides are exceedingly low.. It catalyses the reaction Release of an N-terminal amino acid, preferentially leucine, but not glutamic or aspartic acids.. Presumably involved in the processing and regular turnover of intracellular proteins. Catalyzes the removal of unsubstituted N-terminal amino acids from various peptides. The polypeptide is Probable cytosol aminopeptidase (Escherichia coli O139:H28 (strain E24377A / ETEC)).